Reading from the N-terminus, the 286-residue chain is Ribosomal RNA small subunit methyltransferase H (286 aa).

Residues 30–32 (GGH), D49, F88, D97, and Q104 contribute to the S-adenosyl-L-methionine site. Residues 260–286 (HPLQPSDEESFNNPASRSAKLRALEMR) are disordered.

Belongs to the methyltransferase superfamily. RsmH family.

It localises to the cytoplasm. It catalyses the reaction cytidine(1402) in 16S rRNA + S-adenosyl-L-methionine = N(4)-methylcytidine(1402) in 16S rRNA + S-adenosyl-L-homocysteine + H(+). Functionally, specifically methylates the N4 position of cytidine in position 1402 (C1402) of 16S rRNA. The protein is Ribosomal RNA small subunit methyltransferase H of Solibacter usitatus (strain Ellin6076).